The sequence spans 341 residues: MKALSKLKAEKGIWLVDAPKPEMGHNDLLIKIKKTAICGTDMHIYNWDEWSQKTIPVPMVVGHEYVGEVVDIGQEVRGFNIGDRVSGEGHITCGHCRNCRAGRTHLCRNTSGVGVNREGSFAEYLVIPAFNAFKIPDDISDDLASIFDPFGNAVHTALSFDLVGEDVLITGAGPIGIMAAAVCRHVGARHVVITDVNEYRLELARKMGATRAVNVAQENLKDVMKELGMTEGFDVGLEMSGVPSAFRAMLDTMNHGGKIAMLGIPGGEMAIDWSKVIFKGLVIKGIYGREMFETWYKMASLIQSGLDISPIITHHYKIDDFQKGFDAMGSGQSGKVILSWD.

Residue cysteine 38 coordinates Zn(2+). Active-site charge relay system residues include threonine 40 and histidine 43. Positions 63, 64, 93, 96, 99, and 107 each coordinate Zn(2+). Residues isoleucine 175, aspartate 195, arginine 200, 262 to 264, and 286 to 287 contribute to the NAD(+) site; these read LGI and IY.

It belongs to the zinc-containing alcohol dehydrogenase family. Homotetramer. It depends on Zn(2+) as a cofactor.

It is found in the cytoplasm. The enzyme catalyses L-threonine + NAD(+) = (2S)-2-amino-3-oxobutanoate + NADH + H(+). It participates in amino-acid degradation; L-threonine degradation via oxydo-reductase pathway; glycine from L-threonine: step 1/2. Its function is as follows. Catalyzes the NAD(+)-dependent oxidation of L-threonine to 2-amino-3-ketobutyrate. The polypeptide is L-threonine 3-dehydrogenase (Shewanella oneidensis (strain ATCC 700550 / JCM 31522 / CIP 106686 / LMG 19005 / NCIMB 14063 / MR-1)).